Reading from the N-terminus, the 208-residue chain is Small ribosomal subunit protein uS4 (208 aa).

The S4 RNA-binding domain occupies 96 to 159; that stretch reads SRLDNIVYRL…KKNEKVLEAL (64 aa).

It belongs to the universal ribosomal protein uS4 family. Part of the 30S ribosomal subunit. Contacts protein S5. The interaction surface between S4 and S5 is involved in control of translational fidelity.

One of the primary rRNA binding proteins, it binds directly to 16S rRNA where it nucleates assembly of the body of the 30S subunit. Functionally, with S5 and S12 plays an important role in translational accuracy. This Mycoplasma capricolum subsp. capricolum (strain California kid / ATCC 27343 / NCTC 10154) protein is Small ribosomal subunit protein uS4.